The following is a 438-amino-acid chain: uncharacterized protein (438 aa).

This is an uncharacterized protein from Methanocaldococcus jannaschii (strain ATCC 43067 / DSM 2661 / JAL-1 / JCM 10045 / NBRC 100440) (Methanococcus jannaschii).